A 274-amino-acid chain; its full sequence is Dehydration-responsive element-binding protein 2A (274 aa).

2 stretches are compositionally biased toward basic and acidic residues: residues 1-10 (MERGEGRRGD) and 35-50 (KWWKEQNQKLQEENSS). The tract at residues 1–75 (MERGEGRRGD…KGGPENSNCA (75 aa)) is disordered. A DNA-binding region (AP2/ERF) is located at residues 75–132 (AYRGVRQRTWGKWVAEIREPNRGRRLWLGSFPTALEAAHAYDEAARAMYGPTARVNFA).

The protein belongs to the AP2/ERF transcription factor family. ERF subfamily.

The protein localises to the nucleus. Transcriptional activator that binds specifically to the DNA sequence 5'-[AG]CCGAC-3' of the cis-acting dehydration-responsive element (DRE). Binding to the C-repeat/DRE element mediates high salinity- and dehydration-inducible transcription. In Oryza sativa subsp. japonica (Rice), this protein is Dehydration-responsive element-binding protein 2A (DREB2A).